Consider the following 156-residue polypeptide: tRNA (cytidine(34)-2'-O)-methyltransferase (156 aa).

Positions 102, 124, and 132 each coordinate S-adenosyl-L-methionine.

Belongs to the class IV-like SAM-binding methyltransferase superfamily. RNA methyltransferase TrmH family. TrmL subfamily. In terms of assembly, homodimer.

The protein localises to the cytoplasm. The enzyme catalyses cytidine(34) in tRNA + S-adenosyl-L-methionine = 2'-O-methylcytidine(34) in tRNA + S-adenosyl-L-homocysteine + H(+). It carries out the reaction 5-carboxymethylaminomethyluridine(34) in tRNA(Leu) + S-adenosyl-L-methionine = 5-carboxymethylaminomethyl-2'-O-methyluridine(34) in tRNA(Leu) + S-adenosyl-L-homocysteine + H(+). In terms of biological role, methylates the ribose at the nucleotide 34 wobble position in the two leucyl isoacceptors tRNA(Leu)(CmAA) and tRNA(Leu)(cmnm5UmAA). Catalyzes the methyl transfer from S-adenosyl-L-methionine to the 2'-OH of the wobble nucleotide. This Burkholderia ambifaria (strain ATCC BAA-244 / DSM 16087 / CCUG 44356 / LMG 19182 / AMMD) (Burkholderia cepacia (strain AMMD)) protein is tRNA (cytidine(34)-2'-O)-methyltransferase.